Consider the following 166-residue polypeptide: MSVNMEELRHQVMINQFVLAAGCAADQAKQLLQAAHWQFETALSAFFQESNVPSAQHHPHMMCTPSNTPATPPNFPDALAMFSKLRTSESLQNSSSPAASNACSPPGNFNPYWASSPPNQQPVWLPPASPTTHLHHHHHHPQPVWPPNSQPTGGPQKAMAAMDGQR.

Residues 120 to 166 (QQPVWLPPASPTTHLHHHHHHPQPVWPPNSQPTGGPQKAMAAMDGQR) are disordered.

Belongs to the UBALD family.

The chain is UBA-like domain-containing protein 2 (ubald2) from Xenopus tropicalis (Western clawed frog).